We begin with the raw amino-acid sequence, 860 residues long: DNA mismatch repair protein MutS (860 aa).

606-613 (GPNMSGKS) is an ATP binding site.

It belongs to the DNA mismatch repair MutS family.

In terms of biological role, this protein is involved in the repair of mismatches in DNA. It is possible that it carries out the mismatch recognition step. This protein has a weak ATPase activity. The sequence is that of DNA mismatch repair protein MutS from Geobacillus sp. (strain WCH70).